The following is a 131-amino-acid chain: Protein FAM107B (131 aa).

Ala-2 carries the post-translational modification N-acetylalanine. Disordered stretches follow at residues 39–78 (MNQK…KKKS) and 100–131 (KLQE…AQES). Lys-50 is modified (N6-acetyllysine). Positions 52 to 78 (ELQKVMEKRRRDQVIKQKEEEAQKKKS) are enriched in basic and acidic residues. Positions 61 to 112 (RRDQVIKQKEEEAQKKKSDLEIELLKRQQKLEQLELEKQKLQEEQENAPEFV) form a coiled coil.

Belongs to the FAM107 family.

The chain is Protein FAM107B from Rattus norvegicus (Rat).